Reading from the N-terminus, the 176-residue chain is Large ribosomal subunit protein uL10 (176 aa).

The protein belongs to the universal ribosomal protein uL10 family. In terms of assembly, part of the ribosomal stalk of the 50S ribosomal subunit. The N-terminus interacts with L11 and the large rRNA to form the base of the stalk. The C-terminus forms an elongated spine to which L12 dimers bind in a sequential fashion forming a multimeric L10(L12)X complex.

Its function is as follows. Forms part of the ribosomal stalk, playing a central role in the interaction of the ribosome with GTP-bound translation factors. This is Large ribosomal subunit protein uL10 from Dehalococcoides mccartyi (strain ATCC BAA-2100 / JCM 16839 / KCTC 5957 / BAV1).